A 287-amino-acid chain; its full sequence is Bifunctional protein FolD (287 aa).

Residues 171-173 and Ile-237 contribute to the NADP(+) site; that span reads GHS.

It belongs to the tetrahydrofolate dehydrogenase/cyclohydrolase family. Homodimer.

The enzyme catalyses (6R)-5,10-methylene-5,6,7,8-tetrahydrofolate + NADP(+) = (6R)-5,10-methenyltetrahydrofolate + NADPH. It catalyses the reaction (6R)-5,10-methenyltetrahydrofolate + H2O = (6R)-10-formyltetrahydrofolate + H(+). Its pathway is one-carbon metabolism; tetrahydrofolate interconversion. Functionally, catalyzes the oxidation of 5,10-methylenetetrahydrofolate to 5,10-methenyltetrahydrofolate and then the hydrolysis of 5,10-methenyltetrahydrofolate to 10-formyltetrahydrofolate. The chain is Bifunctional protein FolD from Methanosarcina barkeri (strain Fusaro / DSM 804).